The chain runs to 129 residues: Small ribosomal subunit protein uS11 (129 aa).

The protein belongs to the universal ribosomal protein uS11 family. Part of the 30S ribosomal subunit. Interacts with proteins S7 and S18. Binds to IF-3.

Functionally, located on the platform of the 30S subunit, it bridges several disparate RNA helices of the 16S rRNA. Forms part of the Shine-Dalgarno cleft in the 70S ribosome. This is Small ribosomal subunit protein uS11 from Buchnera aphidicola subsp. Baizongia pistaciae (strain Bp).